The sequence spans 683 residues: Transforming growth factor-beta-induced protein ig-h3 (683 aa).

A signal peptide spans 1-23 (MALFVRLLALALALALGPAATLA). Residue Ser37 is modified to Phosphoserine. The EMI domain maps to 45 to 99 (GPNVCAVQKVIGTNRKYFTNCKQWYQRKICGKSTVISYECCPGYEKVPGERSCPA). Intrachain disulfides connect Cys49–Cys85, Cys74–Cys339, Cys84–Cys97, Cys214–Cys317, and Cys473–Cys478. Residue Cys65 is modified to S-cysteinyl cysteine. 4 FAS1 domains span residues 103–236 (LANL…DKVI), 240–371 (TNNI…DELL), 375–498 (SAKT…DRML), and 502–632 (SGTV…TSVL). A Cell attachment site motif is present at residues 642-644 (RGD).

Binds to type I, II, and IV collagens. Gamma-carboxylation is controversial. Gamma-carboxyglutamated; gamma-carboxyglutamate residues are formed by vitamin K dependent carboxylation; this may be required for calcium binding. According to a more recent report, does not contain vitamin K-dependent gamma-carboxyglutamate residues. In terms of processing, the EMI domain contains 2 expected intradomain disulfide bridges (Cys-49-Cys85 and Cys-84-Cys-97) and one unusual interdomain disulfide bridge to the second FAS1 domain (Cys-74-Cys-339). This arrangement violates the predicted disulfide bridge pattern of an EMI domain. In terms of tissue distribution, located primarily in the epithelium of normal adult cornea, in fetal stromal cells, and both endothelium- and stroma-derived cells in healing corneal wounds. Not expressed in normal adult endothelium and stroma.

The protein localises to the secreted. Its subcellular location is the extracellular space. It localises to the extracellular matrix. Its function is as follows. Plays a role in cell adhesion. May play a role in cell-collagen interactions. The sequence is that of Transforming growth factor-beta-induced protein ig-h3 (TGFBI) from Oryctolagus cuniculus (Rabbit).